Here is a 217-residue protein sequence, read N- to C-terminus: UPF0502 protein AHA_2872 (217 aa).

It belongs to the UPF0502 family.

In Aeromonas hydrophila subsp. hydrophila (strain ATCC 7966 / DSM 30187 / BCRC 13018 / CCUG 14551 / JCM 1027 / KCTC 2358 / NCIMB 9240 / NCTC 8049), this protein is UPF0502 protein AHA_2872.